Consider the following 347-residue polypeptide: uncharacterized protein (347 aa).

The first 21 residues, 1–21 (MRYRIFLLFFFALLPTSLVWA), serve as a signal peptide directing secretion.

This is an uncharacterized protein from Escherichia coli (strain K12).